The primary structure comprises 40 residues: Trypsin inhibitor (40 aa).

Monomer.

It catalyses the reaction Preferential cleavage: Arg-|-Xaa, Lys-|-Xaa.. Its function is as follows. Inhibits trypsin but not chymotrypsin, papain or porcine pancreatic alpha-amylase. Has insecticidal activity against A.aegypti. Functions by inhibiting the A.aegypti midgut proteases to reduce the survival of larva and adults. The protein is Trypsin inhibitor of Cassia leiandra (Marimari).